Reading from the N-terminus, the 727-residue chain is Glucans biosynthesis glucosyltransferase H (727 aa).

Residues Ser-18 to Arg-43 form a disordered region. 7 helical membrane-spanning segments follow: residues Phe-58–Val-78, Leu-94–Phe-114, Leu-278–Val-298, Ile-408–Ala-428, Leu-460–Leu-480, Ile-496–Ile-516, and Leu-572–Trp-592.

This sequence belongs to the glycosyltransferase 2 family. OpgH subfamily.

The protein localises to the cell inner membrane. It participates in glycan metabolism; osmoregulated periplasmic glucan (OPG) biosynthesis. Involved in the biosynthesis of osmoregulated periplasmic glucans (OPGs). This is Glucans biosynthesis glucosyltransferase H from Shewanella sp. (strain ANA-3).